Consider the following 185-residue polypeptide: Ribosome-recycling factor (185 aa).

Belongs to the RRF family.

The protein resides in the cytoplasm. Functionally, responsible for the release of ribosomes from messenger RNA at the termination of protein biosynthesis. May increase the efficiency of translation by recycling ribosomes from one round of translation to another. The chain is Ribosome-recycling factor from Helicobacter pylori (strain Shi470).